A 649-amino-acid polypeptide reads, in one-letter code: Endoplasmic reticulum chaperone BiP (649 aa).

The N-terminal stretch at 1–20 (MGLSTYVGTFLLCILTLSHC) is a signal peptide. ATP-binding positions include 36 to 39 (GTTY), K96, 226 to 228 (GGT), 292 to 299 (EKAKRTLS), and 363 to 366 (GSTR). The nucleotide-binding (NBD) stretch occupies residues 125 to 279 (KPYMKVQVGS…KKKEGKDITK (155 aa)). The segment at 399-499 (VQAGVISGVE…PRGLPQIEVT (101 aa)) is substrate-binding (SBD). Positions 646–649 (KEEL) match the Prevents secretion from ER motif.

This sequence belongs to the heat shock protein 70 family.

It is found in the endoplasmic reticulum lumen. The enzyme catalyses ATP + H2O = ADP + phosphate + H(+). The chaperone activity is regulated by ATP-induced allosteric coupling of the nucleotide-binding (NBD) and substrate-binding (SBD) domains. In the ADP-bound and nucleotide-free (apo) states, the two domains have little interaction. In contrast, in the ATP-bound state the two domains are tightly coupled, which results in drastically accelerated kinetics in both binding and release of polypeptide substrates. J domain-containing co-chaperones stimulate the ATPase activity and are required for efficient substrate recognition. Endoplasmic reticulum chaperone that plays a key role in protein folding and quality control in the endoplasmic reticulum lumen. Involved in the correct folding of proteins and degradation of misfolded proteins. Acts as a key repressor of the unfolded protein response (UPR). This chain is Endoplasmic reticulum chaperone BiP, found in Echinococcus multilocularis (Fox tapeworm).